The following is a 342-amino-acid chain: Ferredoxin--NADP reductase (342 aa).

Residues cysteine 17, aspartate 36, glutamine 44, tyrosine 49, valine 89, phenylalanine 124, aspartate 289, and threonine 330 each contribute to the FAD site.

It belongs to the ferredoxin--NADP reductase type 2 family. In terms of assembly, homodimer. It depends on FAD as a cofactor.

It catalyses the reaction 2 reduced [2Fe-2S]-[ferredoxin] + NADP(+) + H(+) = 2 oxidized [2Fe-2S]-[ferredoxin] + NADPH. The protein is Ferredoxin--NADP reductase of Nitrobacter hamburgensis (strain DSM 10229 / NCIMB 13809 / X14).